We begin with the raw amino-acid sequence, 207 residues long: Coiled-coil domain-containing protein 25 (207 aa).

At 1-104 the chain is on the extracellular side; the sequence is MVFYFTSAVV…SNLKKTADMD (104 aa). Residues 20-24 are DNA-binding; that stretch reads KDKYE. A helical membrane pass occupies residues 105–121; it reads IGQIGFHRQKEVKIVAV. A coiled-coil region spans residues 112-189; sequence RQKEVKIVAV…EDLKNYTSLM (78 aa). The Cytoplasmic segment spans residues 122–207; sequence EKKINEIVNR…EDGYDSDDFM (86 aa). Residues 140 to 183 show a composition bias toward basic and acidic residues; the sequence is YPDLAAEKESRDREERNEKKAQIQEQKKKEKEEVKKKKEMEDLK. Residues 140–207 form a disordered region; sequence YPDLAAEKES…EDGYDSDDFM (68 aa). A compositionally biased stretch (polar residues) spans 184-198; the sequence is NYTSLMKSDNMTTNE. Ser-203 is modified (phosphoserine).

It belongs to the CCDC25 family. As to quaternary structure, interacts (via cytoplasmic region) with ILK.

It is found in the cell membrane. Its subcellular location is the endomembrane system. Transmembrane receptor that senses neutrophil extracellular traps (NETs) and triggers the ILK-PARVB pathway to enhance cell motility. NETs are mainly composed of DNA fibers and are released by neutrophils to bind pathogens during inflammation. Specifically binds NETs on its extracellular region, in particular the 8-OHdG-enriched DNA present in NETs, and recruits ILK, initiating the ILK-PARVB cascade to induce cytoskeleton rearrangement and directional migration of cells. This Danio rerio (Zebrafish) protein is Coiled-coil domain-containing protein 25.